Consider the following 532-residue polypeptide: Probable rhamnogalacturonase B (532 aa).

An N-terminal signal peptide occupies residues 1–21 (MRINTLSLFSLVSLVPTLALA). Cys-42 and Cys-68 are disulfide-bonded. The active-site Proton donor is the Asp-219. Cysteines 221 and 238 form a disulfide. N-linked (GlcNAc...) asparagine glycosylation occurs at Asn-239. The active site involves His-294. A glycan (N-linked (GlcNAc...) asparagine) is linked at Asn-321. 2 disulfide bridges follow: Cys-344/Cys-350 and Cys-374/Cys-383. 2 stretches are compositionally biased toward low complexity: residues 466–475 (TVAAATSTPA) and 490–499 (QPSQQSPGQS). The segment at 466–532 (TVAAATSTPA…HRHHQRHGHH (67 aa)) is disordered. The segment covering 521-532 (AGHRHHQRHGHH) has biased composition (basic residues).

It belongs to the glycosyl hydrolase 28 family.

The protein localises to the secreted. The enzyme catalyses Endohydrolysis of alpha-D-GalA-(1-&gt;2)-alpha-L-Rha glycosidic bond in the rhamnogalacturonan I backbone with initial inversion of anomeric configuration releasing oligosaccharides with beta-D-GalA at the reducing end.. Its function is as follows. Pectinolytic enzymes consist of four classes of enzymes: pectine lyase, polygalacturonase, pectin methylesterase and rhamnogalacturonase. Hydrolyzes alpha-D-galacturonopyranosyl-(1,2)-alpha-L-rhamnopyranosyl linkages in the backbone of the hairy regions of pectins. In Aspergillus oryzae (strain ATCC 42149 / RIB 40) (Yellow koji mold), this protein is Probable rhamnogalacturonase B (rhgB).